The following is a 276-amino-acid chain: Urease accessory protein UreD (276 aa).

It belongs to the UreD family. In terms of assembly, ureD, UreF and UreG form a complex that acts as a GTP-hydrolysis-dependent molecular chaperone, activating the urease apoprotein by helping to assemble the nickel containing metallocenter of UreC. The UreE protein probably delivers the nickel.

Its subcellular location is the cytoplasm. Its function is as follows. Required for maturation of urease via the functional incorporation of the urease nickel metallocenter. This Albidiferax ferrireducens (strain ATCC BAA-621 / DSM 15236 / T118) (Rhodoferax ferrireducens) protein is Urease accessory protein UreD.